A 333-amino-acid polypeptide reads, in one-letter code: Chitinase-like protein 2 (333 aa).

A signal peptide spans 1-27 (MVSKPLFSLLLLTVALVVFQTGTLVNA). Cysteine 50 and cysteine 56 are oxidised to a cystine. Residue asparagine 65 is glycosylated (N-linked (GlcNAc...) asparagine). Cysteines 165 and 175 form a disulfide. Asparagine 216 and asparagine 252 each carry an N-linked (GlcNAc...) asparagine glycan. A disulfide bridge links cysteine 275 with cysteine 313. A disordered region spans residues 307–333 (PHEKLSCADQEPFSSSSSAPPSSGSSS). Low complexity predominate over residues 320–333 (SSSSSAPPSSGSSS).

This sequence belongs to the glycosyl hydrolase 19 family. As to expression, mostly expressed in stems, especially in xylem and interfascicular fibers.

The protein localises to the secreted. Its function is as follows. No chitinase activity. Required for proper cell wall biosynthesis in etiolated seedlings. Prevents lignin accumulation in hypocotyls. The polypeptide is Chitinase-like protein 2 (CTL2) (Arabidopsis thaliana (Mouse-ear cress)).